Reading from the N-terminus, the 372-residue chain is Alanine racemase (372 aa).

The active-site Proton acceptor; specific for D-alanine is the Lys33. Lys33 carries the N6-(pyridoxal phosphate)lysine modification. Arg131 serves as a coordination point for substrate. Tyr261 serves as the catalytic Proton acceptor; specific for L-alanine. Met309 lines the substrate pocket.

This sequence belongs to the alanine racemase family. It depends on pyridoxal 5'-phosphate as a cofactor.

The enzyme catalyses L-alanine = D-alanine. The protein operates within amino-acid biosynthesis; D-alanine biosynthesis; D-alanine from L-alanine: step 1/1. Functionally, catalyzes the interconversion of L-alanine and D-alanine. May also act on other amino acids. The chain is Alanine racemase (alr) from Salinispora arenicola (strain CNS-205).